The chain runs to 375 residues: Succinyl-diaminopimelate desuccinylase (375 aa).

A Zn(2+)-binding site is contributed by His66. The active site involves Asp68. Asp99 provides a ligand contact to Zn(2+). The active-site Proton acceptor is the Glu133. Residues Glu134, Glu162, and His348 each contribute to the Zn(2+) site.

This sequence belongs to the peptidase M20A family. DapE subfamily. In terms of assembly, homodimer. It depends on Zn(2+) as a cofactor. The cofactor is Co(2+).

It catalyses the reaction N-succinyl-(2S,6S)-2,6-diaminopimelate + H2O = (2S,6S)-2,6-diaminopimelate + succinate. Its pathway is amino-acid biosynthesis; L-lysine biosynthesis via DAP pathway; LL-2,6-diaminopimelate from (S)-tetrahydrodipicolinate (succinylase route): step 3/3. In terms of biological role, catalyzes the hydrolysis of N-succinyl-L,L-diaminopimelic acid (SDAP), forming succinate and LL-2,6-diaminopimelate (DAP), an intermediate involved in the bacterial biosynthesis of lysine and meso-diaminopimelic acid, an essential component of bacterial cell walls. The sequence is that of Succinyl-diaminopimelate desuccinylase from Stenotrophomonas maltophilia (strain K279a).